Consider the following 325-residue polypeptide: Ribose-phosphate pyrophosphokinase 2 (325 aa).

An ATP-binding site is contributed by 96–101; that stretch reads RQDKKD. Positions 135, 137, 146, and 150 each coordinate Mg(2+). Histidine 137 contributes to the ATP binding site. The interval 219-234 is binding of phosphoribosylpyrophosphate; it reads KDRVAILVDDMADTCG.

The protein belongs to the ribose-phosphate pyrophosphokinase family. In terms of assembly, homodimer. The active form is probably a hexamer composed of 3 homodimers. Mg(2+) serves as cofactor.

The enzyme catalyses D-ribose 5-phosphate + ATP = 5-phospho-alpha-D-ribose 1-diphosphate + AMP + H(+). It participates in metabolic intermediate biosynthesis; 5-phospho-alpha-D-ribose 1-diphosphate biosynthesis; 5-phospho-alpha-D-ribose 1-diphosphate from D-ribose 5-phosphate (route I): step 1/1. Activated by magnesium and inorganic phosphate. Competitively or non-competitively inhibited by ADP, 2,3-bisphosphoglyceride or GDP. Catalyzes the synthesis of phosphoribosylpyrophosphate (PRPP) that is essential for nucleotide synthesis. The protein is Ribose-phosphate pyrophosphokinase 2 (PRPS2) of Gallus gallus (Chicken).